The sequence spans 743 residues: MNKEHLLKVDPIPDVTIKRGPLRSFLITKPCDNLSSLRTVTSSKEKLLVGCLLIFTAIVRLHNISLPNSVVFGENEVGTFVSQYVNNIFFTDVHPPLVAMLYATVSSVFGYKGLFNYGNIGTEYTANVPYVAMRFFSATLGIVSVLVLYLTLRVSGVKIAVAAICAVCFAIENSFVTLSRFTLIEGPFVFFMACAVYFFRRSELYLPNSCKANKSLLAASIALGFAVSSKWAGLFTIAWAGIIVLWRVWFMIGDLSRPIGSSIKYMAFQFTCLLAIPAFIYFLIFSVHIKTLNVNGISSSFFPAEFRKTLKYNNVIKETVAEVAVGSAVSLNHVGTAGGYLHSHLHNYPAGSMQQQVTLYPHIDQNNKWIIELAEHPNENVTSFQNLTDGTIIKLRQLKNGCRLHSHDHKPPVSQNADWQKEVSCYGYEGFEGDINDDWIIEIDKKRSEPGPAQEHIRAIETKFRLKHYLTGCYLFSHPEKLPEWGFGQQEVTCAYFAREDLTSWYIEENENEISLPNPEKVSYKKMSFWQKFVAIHKFMFYLNNYMDTSHAYSSEPKTWPLMLRGIDFWNENGREVYFLGNAVLWWSVTAFICTFIIGVAVELLAWKLGVNILRDKHIINFHYQVFQYLLGFAAHYFPYFFVGQKLFLYDYLPAYYFGILAFGHALDLISTYISNKRNNTGYIVVAIFMVVCFYFFSEHSPLIYATGWSSNLCKRSKWLGSWDFYCNSLLLSDSHYELNAES.

The Lumenal segment spans residues methionine 1–lysine 46. Asparagine 33 carries N-linked (GlcNAc...) asparagine glycosylation. A helical transmembrane segment spans residues leucine 47–proline 67. The Cytoplasmic portion of the chain corresponds to asparagine 68 to proline 129. A helical membrane pass occupies residues tyrosine 130–leucine 150. The Lumenal segment spans residues threonine 151 to lysine 158. The chain crosses the membrane as a helical span at residues isoleucine 159 to serine 179. Arginine 180 is a topological domain (cytoplasmic). The chain crosses the membrane as a helical span at residues phenylalanine 181 to arginine 201. The Lumenal portion of the chain corresponds to serine 202 to tryptophan 231. An N-linked (GlcNAc...) asparagine glycan is attached at asparagine 213. The chain crosses the membrane as a helical span at residues alanine 232–isoleucine 252. Topologically, residues glycine 253 to lysine 264 are cytoplasmic. A helical transmembrane segment spans residues tyrosine 265 to phenylalanine 285. Residues serine 286–alanine 583 are Lumenal-facing. Residues valine 320–alanine 374 form the MIR 1 domain. Residues asparagine 380 and asparagine 386 are each glycosylated (N-linked (GlcNAc...) asparagine). MIR domains follow at residues phenylalanine 384 to aspartate 444 and glutamine 454 to asparagine 510. A helical membrane pass occupies residues valine 584–leucine 604. Residues leucine 605 to histidine 623 lie on the Cytoplasmic side of the membrane. A helical transmembrane segment spans residues tyrosine 624–glycine 644. The Lumenal portion of the chain corresponds to glutamine 645–lysine 646. A helical membrane pass occupies residues leucine 647–leucine 667. Residues aspartate 668 to tyrosine 683 lie on the Cytoplasmic side of the membrane. Residues isoleucine 684–isoleucine 704 form a helical membrane-spanning segment. The Lumenal portion of the chain corresponds to tyrosine 705–serine 743.

The protein belongs to the glycosyltransferase 39 family. PMT3 and PMT5 form a functional heterodimer. Also forms a minor complex with PMT2.

It is found in the endoplasmic reticulum membrane. The enzyme catalyses a di-trans,poly-cis-dolichyl beta-D-mannosyl phosphate + L-seryl-[protein] = 3-O-(alpha-D-mannosyl)-L-seryl-[protein] + a di-trans,poly-cis-dolichyl phosphate + H(+). It catalyses the reaction a di-trans,poly-cis-dolichyl beta-D-mannosyl phosphate + L-threonyl-[protein] = 3-O-(alpha-D-mannosyl)-L-threonyl-[protein] + a di-trans,poly-cis-dolichyl phosphate + H(+). It functions in the pathway protein modification; protein glycosylation. Functionally, protein O-mannosyltransferase involved in O-glycosylation which is essential for cell wall rigidity. Forms a heterodimeric complex with PMT3 and more rarely with PMT2 to transfer mannose from Dol-P-mannose to Ser or Thr residues on proteins. The chain is Dolichyl-phosphate-mannose--protein mannosyltransferase 5 from Saccharomyces cerevisiae (strain ATCC 204508 / S288c) (Baker's yeast).